An 841-amino-acid polypeptide reads, in one-letter code: Probable outer membrane usher protein EcpC (841 aa).

Positions 1 to 29 are cleaved as a signal peptide; sequence MPLRRFSPGLKAQFAFGMVFLFVQPDASA.

Belongs to the EcpC/MatD family.

Part of the ecpRABCDE operon, which encodes the E.coli common pilus (ECP). ECP is found in both commensal and pathogenic strains and plays a dual role in early-stage biofilm development and host cell recognition. The protein is Probable outer membrane usher protein EcpC (ecpC) of Escherichia coli O157:H7.